A 383-amino-acid chain; its full sequence is Adaptive-response sensory kinase SasA (383 aa).

The region spanning methionine 152 to glutamine 365 is the Histidine kinase domain. Histidine 155 is modified (phosphohistidine; by autocatalysis).

In terms of assembly, homooligomerizes. Interacts with KaiC. Participates in the KaiABC clock complex, whose core is composed of a KaiC homohexamer, 6 KaiB and up to 6 KaiA dimers. SasA and KaiB(fs) compete to bind to KaiC.

The enzyme catalyses ATP + protein L-histidine = ADP + protein N-phospho-L-histidine.. Functionally, member of the two-component regulatory system SasA/RpaA involved in genome-wide circadian gene expression. One of several clock output pathways. Participates in the Kai clock protein complex, the main circadian regulator in cyanobacteria, via its interaction with KaiC. KaiC enhances the autophosphorylation activity of SasA, which then transfers its phosphate group to RpaA to activate it. In addition to its output function, recruits fold-shifted KaiB (KaiB(fs)) to KaiC to cooperatively form the KaiB(6):KaiC(6) complex (independent of SasA kinase activity). Required for robustness of the circadian rhythm of gene expression and is involved in clock output, also required for adaptation to light/dark cycles. The chain is Adaptive-response sensory kinase SasA from Synechococcus sp. (strain CC9311).